The chain runs to 514 residues: Synaptic vesicular amine transporter (514 aa).

Residues 1–20 (MALSELALVRWLQESRRSRK) lie on the Cytoplasmic side of the membrane. The helical transmembrane segment at 21-41 (LILFIVFLALLLDNMLLTVVV) threads the bilayer. The Lumenal, vesicle portion of the chain corresponds to 42–129 (PIIPSYLYSI…EDKDLLNENV (88 aa)). 2 N-linked (GlcNAc...) asparagine glycosylation sites follow: Asn-84 and Asn-91. A disulfide bond links Cys-117 and Cys-324. A helical transmembrane segment spans residues 130–150 (QVGLLFASKATVQLITNPFIG). Residues 151–159 (LLTNRIGYP) lie on the Cytoplasmic side of the membrane. The helical transmembrane segment at 160 to 180 (IPIFAGFCIMFVSTIMFAFSS) threads the bilayer. Over 181-189 (SYAFLLIAR) the chain is Lumenal, vesicle. The chain crosses the membrane as a helical span at residues 190 to 210 (SLQGIGSSCSSVAGMGMLASV). The Cytoplasmic portion of the chain corresponds to 211 to 219 (YTDDEERGN). Residues 220-242 (VMGIALGGLAMGVLVGPPFGSVL) form a helical membrane-spanning segment. Residues Leu-228 and Val-232 each contribute to the serotonin site. The Lumenal, vesicle segment spans residues 243–248 (YEFVGK). Residues 249 to 271 (TAPFLVLAALVLLDGAIQLFVLQ) form a helical membrane-spanning segment. Topologically, residues 272–291 (PSRVQPESQKGTPLTTLLKD) are cytoplasmic. Residues 292–311 (PYILIAAGSICFANMGIAML) traverse the membrane as a helical segment. Serotonin-binding residues include Asn-305, Ile-308, Glu-312, Phe-334, and Tyr-341. Topologically, residues 312–328 (EPALPIWMMETMCSRKW) are lumenal, vesicle. A helical transmembrane segment spans residues 329–352 (QLGVAFLPASISYLIGTNIFGILA). The Cytoplasmic portion of the chain corresponds to 353–357 (HKMGR). The chain crosses the membrane as a helical span at residues 358-378 (WLCALLGMIIVGVSILCIPFA). Residues 379–389 (KNIYGLIAPNF) are Lumenal, vesicle-facing. Residues 390–410 (GVGFAIGMVDSSMMPIMGYLV) traverse the membrane as a helical segment. Asp-399 is a serotonin binding site. Residues 411–414 (DLRH) are Cytoplasmic-facing. The helical transmembrane segment at 415–435 (VSVYGSVYAIADVAFCMGYAI) threads the bilayer. A serotonin-binding site is contributed by Tyr-433. Over 436-440 (GPSAG) the chain is Lumenal, vesicle. A helical transmembrane segment spans residues 441–462 (GAIAKAIGFPWLMTIIGIIDIL). Residues 463–514 (FAPLCFFLRSPPAKEEKMAILMDHNCPIKTKMYTQNNIQSYPIGEDEESESD) lie on the Cytoplasmic side of the membrane. Phosphoserine is present on residues Ser-511 and Ser-513.

It belongs to the major facilitator superfamily. Vesicular transporter family. Interacts with SLC6A3. Expressed in neuronal and neuroendocrine tissues. Detected in central and peripheral nervous system in particular in axonal and dendritic processes in dopaminergic cells of substantia nigra, histaminergic neuronal cell bodies of substantia nigra and tuberomammillary nucleus, in ganglion cells of sympathetic glia and in peripheral sympathetic nerve terminals in stomach and duodenum (at protein level). Highly expressed in chromaffin cells of the adrenal medulla and histamine-storing enterochromaffin-like cells of oxyntic mucosa (at protein level).

It localises to the cytoplasmic vesicle. Its subcellular location is the secretory vesicle. The protein localises to the synaptic vesicle membrane. The protein resides in the secretory vesicle membrane. It is found in the cell projection. It localises to the axon. Its subcellular location is the dendrite. The catalysed reaction is serotonin(in) + 2 H(+)(out) = serotonin(out) + 2 H(+)(in). It catalyses the reaction dopamine(in) + 2 H(+)(out) = dopamine(out) + 2 H(+)(in). It carries out the reaction histamine(in) + 2 H(+)(out) = histamine(out) + 2 H(+)(in). Strongly inhibited by reserpine and tetrabenazine. Also inhibited to a lesser extent by ketanserin and fenfluramine. Reserpine and ketanserin inhibit by blocking the substrate-binding pocket. Tetrabenazine traps SLC18A2/VMAT2 in an occluded conformation and its inhibition is specific to SLC18A2/VMAT2 but not SLC18A1/VMAT1. Its function is as follows. Electrogenic antiporter that exchanges one cationic monoamine with two intravesicular protons across the membrane of secretory and synaptic vesicles. Uses the electrochemical proton gradient established by the V-type proton-pump ATPase to accumulate high concentrations of monoamines inside the vesicles prior to their release via exocytosis. Transports a variety of catecholamines such as dopamine, adrenaline and noradrenaline, histamine, and indolamines such as serotonin. Regulates the transvesicular monoaminergic gradient that determines the quantal size. Mediates somatodendritic dopamine release in hippocampal neurons, likely as part of a regulated secretory pathway that integrates retrograde synaptic signals. Acts as a primary transporter for striatal dopamine loading ensuring impulse-dependent release of dopamine at the synaptic cleft. Responsible for histamine and serotonin storage and subsequent corelease from mast cell granules. This chain is Synaptic vesicular amine transporter (SLC18A2), found in Homo sapiens (Human).